The sequence spans 286 residues: D-tagatose-1,6-bisphosphate aldolase subunit KbaY (286 aa).

Asp82 (proton donor) is an active-site residue. Zn(2+) is bound by residues His83 and His180. Residue Gly181 coordinates dihydroxyacetone phosphate. His208 lines the Zn(2+) pocket. Dihydroxyacetone phosphate contacts are provided by residues 209–211 (GAS) and 230–233 (NVAT).

The protein belongs to the class II fructose-bisphosphate aldolase family. TagBP aldolase KbaY subfamily. Homotetramer. Forms a complex with KbaZ. The cofactor is Zn(2+).

It catalyses the reaction D-tagatofuranose 1,6-bisphosphate = D-glyceraldehyde 3-phosphate + dihydroxyacetone phosphate. The protein operates within carbohydrate metabolism; D-tagatose 6-phosphate degradation; D-glyceraldehyde 3-phosphate and glycerone phosphate from D-tagatose 6-phosphate: step 2/2. Functionally, catalytic subunit of the tagatose-1,6-bisphosphate aldolase KbaYZ, which catalyzes the reversible aldol condensation of dihydroxyacetone phosphate (DHAP or glycerone-phosphate) with glyceraldehyde 3-phosphate (G3P) to produce tagatose 1,6-bisphosphate (TBP). Requires KbaZ subunit for full activity and stability. Is involved in the catabolism of N-acetylgalactosamine and D-galactosamine. This is D-tagatose-1,6-bisphosphate aldolase subunit KbaY (kbaY) from Escherichia coli.